The primary structure comprises 124 residues: Chemotaxis protein CheY1 (124 aa).

The region spanning 2 to 120 is the Response regulatory domain; it reads KLLVVDDSST…VLKEKLEVVL (119 aa). Residues D7, D8, D53, and N55 each contribute to the Mg(2+) site. D53 carries the post-translational modification 4-aspartylphosphate.

In terms of assembly, interacts (when phosphorylated) with FliM. It depends on Mg(2+) as a cofactor. Post-translationally, phosphorylated by CheAY. Dephosphorylated (inactivated) by CheZ.

It is found in the cytoplasm. Functionally, chemotactic response regulator protein that modulates the rotation direction of bacterial flagellar motors. Plays an important role in the colonization and infection of Helicobacter pylori. Upon phosphorylation by CheA, interacts with the flagellar motor protein FliM to cause clockwise flagellar rotation and bacterial reversals, as opposed to straight swimming when CheY1 is not phosphorylated. The chain is Chemotaxis protein CheY1 from Helicobacter pylori (strain ATCC 700392 / 26695) (Campylobacter pylori).